The following is a 137-amino-acid chain: Histone H2B (137 aa).

Residues 1–10 (MAPKAADKKP) show a composition bias toward basic and acidic residues. The disordered stretch occupies residues 1 to 46 (MAPKAADKKPASKAPATASKAPEKKDAGKKTAASGDKKKRSKSRKE). An N6-acetyllysine; alternate mark is found at lysine 8 and lysine 9. Glycyl lysine isopeptide (Lys-Gly) (interchain with G-Cter in SUMO); alternate cross-links involve residues lysine 8 and lysine 9. Phosphoserine is present on serine 12. At lysine 13 the chain carries N6-acetyllysine. An N6-acetyllysine; alternate modification is found at lysine 24. Lysine 24 participates in a covalent cross-link: Glycyl lysine isopeptide (Lys-Gly) (interchain with G-Cter in SUMO); alternate. Lysine 25 is covalently cross-linked (Glycyl lysine isopeptide (Lys-Gly) (interchain with G-Cter in SUMO)). A Glycyl lysine isopeptide (Lys-Gly) (interchain with G-Cter in ubiquitin) cross-link involves residue lysine 131.

Belongs to the histone H2B family. As to quaternary structure, the nucleosome is a histone octamer containing two molecules each of H2A, H2B, H3 and H4 assembled in one H3-H4 heterotetramer and two H2A-H2B heterodimers. The octamer wraps approximately 147 bp of DNA. Post-translationally, monoubiquitinated by the UBC2-BRE1 complex to form H2BK123ub1. H2BK123ub1 gives a specific tag for epigenetic transcriptional activation and is also prerequisite for H3K4me and H3K79me formation. H2BK123ub1 also modulates the formation of double-strand breaks during meiosis and is a prerequisite for DNA-damage checkpoint activation. In terms of processing, phosphorylated to form H2BS10ph during progression through meiotic prophase. May be correlated with chromosome condensation. Acetylated by GCN5 to form H2BK11ac and H2BK16ac. H2BK16ac can also be formed by ESA1. Acetylation of N-terminal lysines and particularly formation of H2BK11acK16ac has a positive effect on transcription. Post-translationally, sumoylation to form H2BK6su or H2BK7su, and probably also H2BK16su or H2BK17su, occurs preferentially near the telomeres and represses gene transcription.

It is found in the nucleus. Its subcellular location is the chromosome. Its function is as follows. Core component of nucleosome. Nucleosomes wrap and compact DNA into chromatin, limiting DNA accessibility to the cellular machineries which require DNA as a template. Histones thereby play a central role in transcription regulation, DNA repair, DNA replication and chromosomal stability. DNA accessibility is regulated via a complex set of post-translational modifications of histones, also called histone code, and nucleosome remodeling. The polypeptide is Histone H2B (HTB1) (Gibberella zeae (strain ATCC MYA-4620 / CBS 123657 / FGSC 9075 / NRRL 31084 / PH-1) (Wheat head blight fungus)).